Consider the following 167-residue polypeptide: Ribosome rescue factor SmrB (167 aa).

A Smr domain is found at 91–166; that stretch reads LDLHGLTREQ…GEAAILILVD (76 aa).

It belongs to the SmrB family. As to quaternary structure, associates with collided ribosomes, but not with correctly translating polysomes.

In terms of biological role, acts as a ribosome collision sensor. Detects stalled/collided disomes (pairs of ribosomes where the leading ribosome is stalled and a second ribosome has collided with it) and endonucleolytically cleaves mRNA at the 5' boundary of the stalled ribosome. Stalled/collided disomes form a new interface (primarily via the 30S subunits) that binds SmrB. Cleaved mRNA becomes available for tmRNA ligation, leading to ribosomal subunit dissociation and rescue of stalled ribosomes. This is Ribosome rescue factor SmrB from Haemophilus influenzae (strain ATCC 51907 / DSM 11121 / KW20 / Rd).